We begin with the raw amino-acid sequence, 607 residues long: Elongation factor 4 (607 aa).

Residues 11-193 (EKIRNFSIIA…QIVEKVPAPT (183 aa)) form the tr-type G domain. GTP is bound by residues 23 to 28 (DHGKST) and 140 to 143 (NKID).

It belongs to the TRAFAC class translation factor GTPase superfamily. Classic translation factor GTPase family. LepA subfamily.

The protein resides in the cell membrane. The enzyme catalyses GTP + H2O = GDP + phosphate + H(+). Its function is as follows. Required for accurate and efficient protein synthesis under certain stress conditions. May act as a fidelity factor of the translation reaction, by catalyzing a one-codon backward translocation of tRNAs on improperly translocated ribosomes. Back-translocation proceeds from a post-translocation (POST) complex to a pre-translocation (PRE) complex, thus giving elongation factor G a second chance to translocate the tRNAs correctly. Binds to ribosomes in a GTP-dependent manner. The polypeptide is Elongation factor 4 (Streptococcus pneumoniae serotype 19F (strain G54)).